The sequence spans 737 residues: FYVE, RhoGEF and PH domain-containing protein 3 (737 aa).

A disordered region spans residues M1 to Q151. The segment covering A126 to S136 has biased composition (acidic residues). Position 128 is a phosphoserine (S128). The DH domain occupies K157–A341. Positions E370–E469 constitute a PH 1 domain. Positions Q487 to K533 are disordered. The segment covering T500–E512 has biased composition (low complexity). A compositionally biased stretch (basic and acidic residues) spans E521–K533. The segment at D532 to P588 adopts an FYVE-type zinc-finger fold. Zn(2+) is bound by residues C538, C541, C555, C558, C563, C566, C580, and C583. Disordered regions lie at residues V589–C620 and A713–P737. Positions P616 to R715 constitute a PH 2 domain.

Its subcellular location is the cytoplasm. It is found in the cytoskeleton. In terms of biological role, promotes the formation of filopodia. May activate CDC42, a member of the Ras-like family of Rho- and Rac proteins, by exchanging bound GDP for free GTP. Plays a role in regulating the actin cytoskeleton and cell shape. The protein is FYVE, RhoGEF and PH domain-containing protein 3 (FGD3) of Pongo abelii (Sumatran orangutan).